We begin with the raw amino-acid sequence, 1068 residues long: Probable ATPase FE772_23070 (1068 aa).

Residue 217–224 (GGGGAGKT) coordinates ATP.

In terms of biological role, involved in defense against bacteriophages. When this probable 4 gene operon (bGSDM-FE772_23060-FE772_23065-FE772_23070) is inserted into E.coli it provides nearly 100-fold protection against phages T5 and T6 and about 8-fold against phage T4. The operon without bGSDM no longer protects against phage. Probably a nucleotide hydrolase, possibly of ATP. This Lysobacter enzymogenes protein is Probable ATPase FE772_23070.